The following is a 357-amino-acid chain: Prostaglandin D2 receptor-like (357 aa).

Residues 1 to 20 (MNESYRCQAATWVERGSSAT) lie on the Extracellular side of the membrane. N-linked (GlcNAc...) asparagine glycosylation occurs at asparagine 2. The helical transmembrane segment at 21–41 (MGGVLFSAGLLGNLLALVLLA) threads the bilayer. The Cytoplasmic segment spans residues 42–57 (RSGLGSCRPGPLHPPP). The chain crosses the membrane as a helical span at residues 58–78 (SVFYVLVCGLTVTHLLGKCLI). Topologically, residues 79–106 (SPMVLAAYAQNRSLKELLPASGNQLCEA) are extracellular. Asparagine 89 carries an N-linked (GlcNAc...) asparagine glycan. Cysteine 104 and cysteine 182 are oxidised to a cystine. A helical transmembrane segment spans residues 107–127 (FAFLMSFFGLASTLQLLAMAL). The Cytoplasmic segment spans residues 128 to 149 (ECWLSLGHPFFYQRHITARRGV). Residues 150-170 (LVAPVAGAFSLAFCALPFAGF) traverse the membrane as a helical segment. At 171–194 (GKFVQYCPGTWCFIQMIHKKRSFS) the chain is on the extracellular side. Residues 195 to 215 (VIGFSVLYSSLMALLVLATVV) form a helical membrane-spanning segment. Residues 216–261 (CNLGAMSNLYAMHRRQRHHPRRCSRDRAQSGSDYRHGSPNPLEELD) are Cytoplasmic-facing. The chain crosses the membrane as a helical span at residues 262-282 (HFVLLALTTVLFTMCSLPLIY). At 283–306 (RAYYGAFKLVDRADGDSEDLQALR) the chain is on the extracellular side. A helical membrane pass occupies residues 307–327 (FLSVISIVDPWIFIIFRTSVF). Topologically, residues 328–357 (RMLFHKAFTRPLIYRNWCSHSWQTNMESTL) are cytoplasmic.

This sequence belongs to the G-protein coupled receptor 1 family. As to expression, strongly expressed in eye and gastrointestinal tract (GIT), moderately in the brain and oviduct and weakly in the epididymis. In the eye, expressed in the epithelium of the iris and ciliary body and in photoreceptor cells of the retina. In the brain, expressed in leptomeninges, choroid plexus and spinal cord (sensory and motor neurons of the dorsal and ventral horns). In the stomach, expressed in the mucous-secreting goblet cells and the columnar epithelium. Expressed in platelets.

It is found in the cell membrane. Its function is as follows. Receptor for prostaglandin D2 (PGD2). The activity of this receptor is mainly mediated by G(s) proteins that stimulate adenylate cyclase, resulting in an elevation of intracellular cAMP. A mobilization of calcium is also observed, but without formation of inositol 1,4,5-trisphosphate. The polypeptide is Prostaglandin D2 receptor-like (Ptgdrl) (Rattus norvegicus (Rat)).